We begin with the raw amino-acid sequence, 330 residues long: tRNA (guanine-N(7)-)-methyltransferase (330 aa).

The segment at 1 to 27 (MSTPPAKRQKRDQYRKRAAAAANEDTG) is disordered. Residues 7 to 18 (KRQKRDQYRKRA) show a composition bias toward basic residues. Residues Gly-95 and 118-119 (EI) contribute to the S-adenosyl-L-methionine site. The segment at 138–185 (QNQLKNSSTTASESPAPAIPAEPATDGASPDAASTPETSNSPVPGGYQ) is disordered. The span at 144–162 (SSTTASESPAPAIPAEPAT) shows a compositional bias: low complexity. Positions 172-185 (TPETSNSPVPGGYQ) are enriched in polar residues. Residues 193-194 (NT) and Cys-213 each bind S-adenosyl-L-methionine. The active site involves Asp-216. Residue 302–304 (TEE) coordinates S-adenosyl-L-methionine.

Belongs to the class I-like SAM-binding methyltransferase superfamily. TrmB family. In terms of assembly, forms a complex with trm82.

Its subcellular location is the nucleus. The enzyme catalyses guanosine(46) in tRNA + S-adenosyl-L-methionine = N(7)-methylguanosine(46) in tRNA + S-adenosyl-L-homocysteine. It functions in the pathway tRNA modification; N(7)-methylguanine-tRNA biosynthesis. Catalyzes the formation of N(7)-methylguanine at position 46 (m7G46) in tRNA. This is tRNA (guanine-N(7)-)-methyltransferase (trm8) from Aspergillus oryzae (strain ATCC 42149 / RIB 40) (Yellow koji mold).